A 152-amino-acid polypeptide reads, in one-letter code: Large ribosomal subunit protein bL9 (152 aa).

It belongs to the bacterial ribosomal protein bL9 family.

In terms of biological role, binds to the 23S rRNA. The polypeptide is Large ribosomal subunit protein bL9 (Synechococcus sp. (strain CC9605)).